The following is a 160-amino-acid chain: Xanthine-guanine phosphoribosyltransferase (160 aa).

Residues 41-42 (RG) and 93-101 (DDLVDTGRT) each bind 5-phospho-alpha-D-ribose 1-diphosphate. Asp-94 lines the Mg(2+) pocket. 2 residues coordinate guanine: Asp-97 and Ile-140. Residues Asp-97 and Ile-140 each contribute to the xanthine site. Residues 97-101 (DTGRT) and 139-140 (WI) contribute to the GMP site.

This sequence belongs to the purine/pyrimidine phosphoribosyltransferase family. XGPT subfamily. As to quaternary structure, homotetramer. The cofactor is Mg(2+).

The protein resides in the cell inner membrane. It carries out the reaction GMP + diphosphate = guanine + 5-phospho-alpha-D-ribose 1-diphosphate. The enzyme catalyses XMP + diphosphate = xanthine + 5-phospho-alpha-D-ribose 1-diphosphate. It catalyses the reaction IMP + diphosphate = hypoxanthine + 5-phospho-alpha-D-ribose 1-diphosphate. It participates in purine metabolism; GMP biosynthesis via salvage pathway; GMP from guanine: step 1/1. The protein operates within purine metabolism; XMP biosynthesis via salvage pathway; XMP from xanthine: step 1/1. Functionally, purine salvage pathway enzyme that catalyzes the transfer of the ribosyl-5-phosphate group from 5-phospho-alpha-D-ribose 1-diphosphate (PRPP) to the N9 position of the 6-oxopurines guanine and xanthine to form the corresponding ribonucleotides GMP (guanosine 5'-monophosphate) and XMP (xanthosine 5'-monophosphate), with the release of PPi. To a lesser extent, also acts on hypoxanthine. This Desulfotalea psychrophila (strain LSv54 / DSM 12343) protein is Xanthine-guanine phosphoribosyltransferase.